Here is a 360-residue protein sequence, read N- to C-terminus: Photosystem II protein D1 1 (360 aa).

3 helical membrane-spanning segments follow: residues 29–46 (YVGW…TAAI), 118–133 (HFLI…QWEL), and 142–156 (WIPV…AATA). Position 118 (His-118) interacts with chlorophyll a. Tyr-126 provides a ligand contact to pheophytin a. Positions 170 and 189 each coordinate [CaMn4O5] cluster. A helical membrane pass occupies residues 197 to 218 (FHMIGVAGVFGGALFSAMHGSL). His-198 contributes to the chlorophyll a binding site. Residues His-215 and 264–265 (SF) each bind a quinone. His-215 contacts Fe cation. His-272 provides a ligand contact to Fe cation. A helical transmembrane segment spans residues 274-288 (FLAAWPVIGIWFAAL). [CaMn4O5] cluster contacts are provided by His-332, Glu-333, Asp-342, and Ala-344. Residues 345–360 (SGEVQPIALAAPAIAS) constitute a propeptide that is removed on maturation.

Belongs to the reaction center PufL/M/PsbA/D family. PSII is composed of 1 copy each of membrane proteins PsbA, PsbB, PsbC, PsbD, PsbE, PsbF, PsbH, PsbI, PsbJ, PsbK, PsbL, PsbM, PsbT, PsbX, PsbY, PsbZ, Psb30/Ycf12, peripheral proteins PsbO, CyanoQ (PsbQ), PsbU, PsbV and a large number of cofactors. It forms dimeric complexes. Requires The D1/D2 heterodimer binds P680, chlorophylls that are the primary electron donor of PSII, and subsequent electron acceptors. It shares a non-heme iron and each subunit binds pheophytin, quinone, additional chlorophylls, carotenoids and lipids. D1 provides most of the ligands for the Mn4-Ca-O5 cluster of the oxygen-evolving complex (OEC). There is also a Cl(-1) ion associated with D1 and D2, which is required for oxygen evolution. The PSII complex binds additional chlorophylls, carotenoids and specific lipids. as cofactor. Tyr-161 forms a radical intermediate that is referred to as redox-active TyrZ, YZ or Y-Z. Post-translationally, C-terminally processed by CtpA; processing is essential to allow assembly of the oxygen-evolving complex and thus photosynthetic growth.

It localises to the cellular thylakoid membrane. The enzyme catalyses 2 a plastoquinone + 4 hnu + 2 H2O = 2 a plastoquinol + O2. Its function is as follows. Photosystem II (PSII) is a light-driven water:plastoquinone oxidoreductase that uses light energy to abstract electrons from H(2)O, generating O(2) and a proton gradient subsequently used for ATP formation. It consists of a core antenna complex that captures photons, and an electron transfer chain that converts photonic excitation into a charge separation. The D1/D2 (PsbA/PsbD) reaction center heterodimer binds P680, the primary electron donor of PSII as well as several subsequent electron acceptors. In Trichormus variabilis (strain ATCC 29413 / PCC 7937) (Anabaena variabilis), this protein is Photosystem II protein D1 1.